The chain runs to 119 residues: Large ribosomal subunit protein bL19 (119 aa).

The protein belongs to the bacterial ribosomal protein bL19 family.

This protein is located at the 30S-50S ribosomal subunit interface and may play a role in the structure and function of the aminoacyl-tRNA binding site. This chain is Large ribosomal subunit protein bL19, found in Petrotoga mobilis (strain DSM 10674 / SJ95).